The chain runs to 131 residues: Small ribosomal subunit protein bS6 (131 aa).

The interval 100–131 (SPMVKAKDERRERREDFANETSDDADAGDSEE) is disordered. Residues 104 to 116 (KAKDERRERREDF) show a composition bias toward basic and acidic residues. Residues 120–131 (TSDDADAGDSEE) show a composition bias toward acidic residues.

It belongs to the bacterial ribosomal protein bS6 family.

Functionally, binds together with bS18 to 16S ribosomal RNA. The protein is Small ribosomal subunit protein bS6 of Erwinia tasmaniensis (strain DSM 17950 / CFBP 7177 / CIP 109463 / NCPPB 4357 / Et1/99).